A 145-amino-acid chain; its full sequence is MIALIQRVSEAKVVVDGATIGEIDRGLLVLLGVEREDNIEKMQKLATKVMSYRVFSDENGKMNLNLEQAGGSLLVVSQFTLAADTGRGLRPSFSGAGTPEQARELYEAFIDFCKSKGVNTQTGQFAADMKVSLVNDGPVTFNLQV.

A Gly-cisPro motif, important for rejection of L-amino acids motif is present at residues 137–138 (GP).

It belongs to the DTD family. In terms of assembly, homodimer.

The protein resides in the cytoplasm. It carries out the reaction glycyl-tRNA(Ala) + H2O = tRNA(Ala) + glycine + H(+). The catalysed reaction is a D-aminoacyl-tRNA + H2O = a tRNA + a D-alpha-amino acid + H(+). Functionally, an aminoacyl-tRNA editing enzyme that deacylates mischarged D-aminoacyl-tRNAs. Also deacylates mischarged glycyl-tRNA(Ala), protecting cells against glycine mischarging by AlaRS. Acts via tRNA-based rather than protein-based catalysis; rejects L-amino acids rather than detecting D-amino acids in the active site. By recycling D-aminoacyl-tRNA to D-amino acids and free tRNA molecules, this enzyme counteracts the toxicity associated with the formation of D-aminoacyl-tRNA entities in vivo and helps enforce protein L-homochirality. The sequence is that of D-aminoacyl-tRNA deacylase from Shewanella halifaxensis (strain HAW-EB4).